Reading from the N-terminus, the 286-residue chain is MKQFIVLTVVLLAIQELQGGAVLTVDEKCTCKDTLNTLSKDDLILRLITCTQRNENLEGIITAIKKDNDFLNKENDALRAQNCELTAQLAKEKKAREAAENALCECQKNSELLKQTIEQLKKELAQTKQELANCKEALANCKAENAKLLKKIEELNCTITQLQEELEQCRARERDLQCQLDECNKKLTICNNELIACRKQQEELRCEIERLNAEIKRLEAQNAACENALNTLRCETSEFLAIATQRQSKLTTIIQSAEAESTAIGASYIGFRNTHDLTCAPCGGPA.

Positions 1–19 are cleaved as a signal peptide; it reads MKQFIVLTVVLLAIQELQG. The helical stretch occupies residues 61 to 235; sequence ITAIKKDNDF…ENALNTLRCE (175 aa). The N-linked (GlcNAc...) asparagine glycan is linked to Asn156.

The polypeptide is Puff II/9-1 protein (II/9-1) (Bradysia coprophila (Dark-winged fungus gnat)).